The primary structure comprises 448 residues: tRNA wybutosine-synthesizing protein 2 homolog (448 aa).

S-adenosyl-L-methionine contacts are provided by residues serine 218, lysine 225, glutamate 265, and 293–294 (DN).

The protein belongs to the class I-like SAM-binding methyltransferase superfamily. TRM5/TYW2 family.

It catalyses the reaction 4-demethylwyosine(37) in tRNA(Phe) + S-adenosyl-L-methionine = 4-demethyl-7-[(3S)-3-amino-3-carboxypropyl]wyosine(37) in tRNA(Phe) + S-methyl-5'-thioadenosine + H(+). It participates in tRNA modification; wybutosine-tRNA(Phe) biosynthesis. Its function is as follows. S-adenosyl-L-methionine-dependent transferase that acts as a component of the wybutosine biosynthesis pathway. Wybutosine is a hyper modified guanosine with a tricyclic base found at the 3'-position adjacent to the anticodon of eukaryotic phenylalanine tRNA. Catalyzes the transfer of the alpha-amino-alpha-carboxypropyl (acp) group from S-adenosyl-L-methionine to the C-7 position of 4-demethylwyosine (imG-14) to produce wybutosine-86. The chain is tRNA wybutosine-synthesizing protein 2 homolog (TRMT12) from Homo sapiens (Human).